Here is a 256-residue protein sequence, read N- to C-terminus: Thiazole synthase (256 aa).

The Schiff-base intermediate with DXP role is filled by Lys98. 1-deoxy-D-xylulose 5-phosphate contacts are provided by residues Gly159, 185 to 186 (AG), and 207 to 208 (NT).

The protein belongs to the ThiG family. In terms of assembly, homotetramer. Forms heterodimers with either ThiH or ThiS.

The protein localises to the cytoplasm. The enzyme catalyses [ThiS sulfur-carrier protein]-C-terminal-Gly-aminoethanethioate + 2-iminoacetate + 1-deoxy-D-xylulose 5-phosphate = [ThiS sulfur-carrier protein]-C-terminal Gly-Gly + 2-[(2R,5Z)-2-carboxy-4-methylthiazol-5(2H)-ylidene]ethyl phosphate + 2 H2O + H(+). It participates in cofactor biosynthesis; thiamine diphosphate biosynthesis. In terms of biological role, catalyzes the rearrangement of 1-deoxy-D-xylulose 5-phosphate (DXP) to produce the thiazole phosphate moiety of thiamine. Sulfur is provided by the thiocarboxylate moiety of the carrier protein ThiS. In vitro, sulfur can be provided by H(2)S. This chain is Thiazole synthase, found in Aliivibrio salmonicida (strain LFI1238) (Vibrio salmonicida (strain LFI1238)).